A 517-amino-acid chain; its full sequence is Nuclear transcription factor Y subunit alpha (517 aa).

Over residues 1-11 (MNQINYLTSER) the composition is skewed to polar residues. 4 disordered regions span residues 1-95 (MNQI…MDIH), 121-183 (RIDY…NFNY), 252-281 (ESEN…RGCG), and 304-517 (AAAN…NNRS). Low complexity-rich tracts occupy residues 26–81 (NNSS…SSSS) and 126–183 (NNNN…NFNY). The short motif at 232–255 (YVNAKQYNRILKRRAARAKLESEN) is the Subunit association domain (SAD) element. Positions 262–287 (KAYQHESRHQHAIRRQRGCGGRFLTK) form a DNA-binding region, NFYA/HAP2-type. Low complexity predominate over residues 304–345 (AAANPNASSTSTTTSNITNNNNNNNNNNNTNNNNNNNNTNVN). Residues 359 to 371 (SDDDIENDVENDS) are compositionally biased toward acidic residues. Composition is skewed to low complexity over residues 377–388 (KNNSNSPNQSSS) and 408–423 (NNNI…NNNN). The span at 438–447 (PLLNNGHIQA) shows a compositional bias: polar residues. Residues 448-517 (QQNQSPSSSP…PLSNFSNNRS (70 aa)) are compositionally biased toward low complexity.

The protein belongs to the NFYA/HAP2 subunit family. In terms of assembly, heterotrimeric transcription factor composed of three components, nfyA, nfyB and nfyC. nfyB and nfyC must interact and dimerize for nfyA association and DNA binding.

The protein localises to the nucleus. Functionally, component of the NF-Y/HAP transcription factor complex. The NF-Y complex stimulates the transcription of various genes by recognizing and binding to a CCAAT motif in promoters. In Dictyostelium discoideum (Social amoeba), this protein is Nuclear transcription factor Y subunit alpha (nfyA).